Here is a 1654-residue protein sequence, read N- to C-terminus: Cortactin-binding protein 2 (1654 aa).

The tract at residues 1 to 31 (MATDGASCEPDFSRSPEDAAGATAEPAKKEF) is disordered. A coiled-coil region spans residues 119–276 (RKMQERMSTQ…EQLKRGSDSK (158 aa)). Disordered regions lie at residues 361–432 (SHGD…LHSP), 455–480 (GNAN…PTSR), and 495–596 (QALS…PQGN). The segment covering 368–379 (SSVPAAPTPSAS) has biased composition (low complexity). 2 stretches are compositionally biased toward polar residues: residues 384–395 (NGPSTGSAPDPT) and 411–422 (QTPGTAAQSYSQ). Asymmetric dimethylarginine is present on R499. Positions 518–531 (DVSSHTPVSRTSLK) are enriched in polar residues. ANK repeat units follow at residues 710–740 (GRPT…DINY), 744–773 (DGHS…QVNA), 777–806 (NGFT…NINH), 810–839 (GGQT…DRSV), 843–872 (DGWT…PIPG), and 913–943 (EGWT…EPER). The disordered stretch occupies residues 1454–1478 (GAWRKVSTSPRKKSGHFSSPVWNKP). S1523 is modified (phosphoserine). Residues 1556–1654 (RRLHSSGNNP…KEEIWNLRKK (99 aa)) form a disordered region. Over residues 1581–1598 (KEVSPLSSHQTTECSNNK) the composition is skewed to polar residues. Over residues 1623-1637 (SQNTKRSSSSSNTRQ) the composition is skewed to low complexity. Basic and acidic residues predominate over residues 1644–1654 (SKEEIWNLRKK).

In terms of assembly, interacts with CTTN/cortactin SH3 domain. Interacts with STRN, STRN4/zinedin and MOB4/phocein; this interactions mediate the association with the STRIPAK core complex and may regulate dendritic spine distribution of the STRIPAK complex in hippocampal neurons. Activation of glutamate receptors weakens the interaction with STRN and STRN4.

The protein resides in the cytoplasm. The protein localises to the cell cortex. It localises to the cell projection. Its subcellular location is the dendritic spine. Functionally, regulates the dendritic spine distribution of CTTN/cortactin in hippocampal neurons, and thus controls dendritic spinogenesis and dendritic spine maintenance. Associates with the striatin-interacting phosphatase and kinase (STRIPAK) core complex to regulate dendritic spine distribution of the STRIPAK complex in hippocampal neurons. This chain is Cortactin-binding protein 2 (CTTNBP2), found in Atelerix albiventris (Middle-African hedgehog).